The chain runs to 201 residues: dITP/XTP pyrophosphatase (201 aa).

7-12 (TNNKGK) serves as a coordination point for substrate. Positions 40 and 69 each coordinate Mg(2+). Catalysis depends on Asp69, which acts as the Proton acceptor. Substrate contacts are provided by residues Ser70, 152-155 (FGYD), Lys175, and 180-181 (HR).

The protein belongs to the HAM1 NTPase family. As to quaternary structure, homodimer. It depends on Mg(2+) as a cofactor.

The enzyme catalyses XTP + H2O = XMP + diphosphate + H(+). It carries out the reaction dITP + H2O = dIMP + diphosphate + H(+). It catalyses the reaction ITP + H2O = IMP + diphosphate + H(+). Pyrophosphatase that catalyzes the hydrolysis of nucleoside triphosphates to their monophosphate derivatives, with a high preference for the non-canonical purine nucleotides XTP (xanthosine triphosphate), dITP (deoxyinosine triphosphate) and ITP. Seems to function as a house-cleaning enzyme that removes non-canonical purine nucleotides from the nucleotide pool, thus preventing their incorporation into DNA/RNA and avoiding chromosomal lesions. The chain is dITP/XTP pyrophosphatase from Desulforamulus reducens (strain ATCC BAA-1160 / DSM 100696 / MI-1) (Desulfotomaculum reducens).